Consider the following 747-residue polypeptide: DNA-directed RNA polymerase subunit beta' (747 aa).

Positions 70, 72, 97, and 100 each coordinate Zn(2+). Mg(2+)-binding residues include Asp-502, Asp-504, and Asp-506.

The protein belongs to the RNA polymerase beta' chain family. RpoC1 subfamily. In plastids the minimal PEP RNA polymerase catalytic core is composed of four subunits: alpha, beta, beta', and beta''. When a (nuclear-encoded) sigma factor is associated with the core the holoenzyme is formed, which can initiate transcription. It depends on Mg(2+) as a cofactor. Zn(2+) is required as a cofactor.

The protein localises to the plastid. Its subcellular location is the chloroplast. The catalysed reaction is RNA(n) + a ribonucleoside 5'-triphosphate = RNA(n+1) + diphosphate. Functionally, DNA-dependent RNA polymerase catalyzes the transcription of DNA into RNA using the four ribonucleoside triphosphates as substrates. In Gnetum parvifolium (Small-leaved jointfir), this protein is DNA-directed RNA polymerase subunit beta'.